Consider the following 251-residue polypeptide: Azurocidin (251 aa).

A signal peptide spans Met-1–Ala-19. Positions Gly-20–Asp-26 are cleaved as a propeptide — removed in mature form. The propeptide at Leu-25–Asp-26 is dipeptide found in non-mature form. A Peptidase S1 domain is found at Ile-27–Asn-244. Positions Asn-46–Gln-70 are possesses antibiotic activity. Cys-52 and Cys-68 are oxidised to a cystine. A glycan (N-linked (GlcNAc...) asparagine; partial) is linked at Asn-126. Residue Asn-140 is glycosylated (N-linked (GlcNAc...) asparagine). 3 disulfide bridges follow: Cys-149-Cys-207, Cys-180-Cys-186, and Cys-197-Cys-222. Asn-171 is a glycosylation site (N-linked (GlcNAc...) asparagine; partial). Positions Gly-249–Ala-251 are cleaved as a propeptide — removed in mature form.

Belongs to the peptidase S1 family. Elastase subfamily. Cleavage of the N-terminal propeptide which is composed of 7 amino acids occurs in two steps. The initial cleavage of 5 amino acids is followed by the cleavage of a dipeptide to produce the mature form.

It is found in the cytoplasmic granule membrane. Its function is as follows. This is a neutrophil granule-derived antibacterial and monocyte- and fibroblast-specific chemotactic glycoprotein. Binds heparin. The cytotoxic action is limited to many species of Gram-negative bacteria; this specificity may be explained by a strong affinity of the very basic N-terminal half for the negatively charged lipopolysaccharides that are unique to the Gram-negative bacterial outer envelope. It may play a role in mediating recruitment of monocytes in the second wave of inflammation. Has antibacterial activity against the Gram-negative bacterium P.aeruginosa, this activity is inhibited by LPS from P.aeruginosa. Acting alone, it does not have antimicrobial activity against the Gram-negative bacteria A.actinomycetemcomitans ATCC 29532, A.actinomycetemcomitans NCTC 9709, A.actinomycetemcomitans FDC-Y4, H.aphrophilus ATCC 13252, E.corrodens ATCC 23834, C.sputigena ATCC 33123, Capnocytophaga sp ATCC 33124, Capnocytophaga sp ATCC 27872 or E.coli ML-35. Has antibacterial activity against C.sputigena ATCC 33123 when acting synergistically with either elastase or cathepsin G. The polypeptide is Azurocidin (Homo sapiens (Human)).